We begin with the raw amino-acid sequence, 400 residues long: Enoyl-[acyl-carrier-protein] reductase [NADH] (400 aa).

NAD(+)-binding positions include Gly48 to Tyr53, Phe74 to Glu75, Asp111 to Ala112, and Leu139 to Ala140. Tyr225 is a substrate binding site. Residue Tyr235 is the Proton donor of the active site. Residues Lys244 and Val273–Thr275 each bind NAD(+).

This sequence belongs to the TER reductase family. As to quaternary structure, monomer.

It carries out the reaction a 2,3-saturated acyl-[ACP] + NAD(+) = a (2E)-enoyl-[ACP] + NADH + H(+). It functions in the pathway lipid metabolism; fatty acid biosynthesis. Functionally, involved in the final reduction of the elongation cycle of fatty acid synthesis (FAS II). Catalyzes the reduction of a carbon-carbon double bond in an enoyl moiety that is covalently linked to an acyl carrier protein (ACP). This is Enoyl-[acyl-carrier-protein] reductase [NADH] from Shewanella baltica (strain OS185).